A 151-amino-acid polypeptide reads, in one-letter code: Cytochrome c-type biogenesis protein CcmE (151 aa).

Residues 1-8 (MNPLRRKR) lie on the Cytoplasmic side of the membrane. A helical; Signal-anchor for type II membrane protein transmembrane segment spans residues 9–29 (LLIILAILVGVGIAVGLALSA). The Periplasmic portion of the chain corresponds to 30 to 151 (LQQNINLFYT…QSAPTPAKEG (122 aa)). Residues H124 and Y128 each contribute to the heme site.

Belongs to the CcmE/CycJ family.

It is found in the cell inner membrane. Functionally, heme chaperone required for the biogenesis of c-type cytochromes. Transiently binds heme delivered by CcmC and transfers the heme to apo-cytochromes in a process facilitated by CcmF and CcmH. The polypeptide is Cytochrome c-type biogenesis protein CcmE (Pseudomonas fluorescens (strain SBW25)).